The following is a 692-amino-acid chain: MSASSVELEKIRNIGIMAHIDAGKTTTTERILLYTGVNRTVGEVHEGAATMDWMEQEKERGITITSAATTCWWKGAKINIIDTPGHVDFTIEVERSLRVLDGAVAVFDGVAGVEPQSETVWRQADKHNVPRLCFVNKMDRMGADFYRCAEMLVSKLSANPVILQLPIGVSESFVGVVDLVKMQAIYWQGDDFGAKFEYREIPADLAEQAALYREKLMEKIAETDDKFMDKYFGGEEISEEEIRAAIRAGTIGYHFVPVLCGSAFKNKGVQPLLDAVVDYLPSPVDTKDIIGENEKGEEINIKPDPKAPFVGLAFKVMNDPYVGSLTFVRIYSGTLNSGDVVINSHGDNKERIGRMLLMHANSREDVKSETAGNIVALAGLKNTSTGDTLCASGKVLTLERISAPDPVIEIAVEPKSTAEQEKMALAVARLCAEDPSLKVASNEETGQTLLRGMGELHLEIILDRLKREFNVNVNVGDPQVAYRETITQSYEIDYTHKKQTGGAGQFARVKMLFEPYDDGEFLFESKITGGAIPKEYIPGVEKGLVSVKNKGLLANYPIIGFKVTLMDGAFHDVDSSVLAFEIAARDAFKEAAKKLGLKIMEPLMRVEIVTPEEYTGTVIGDLNSRRGKIAEMEAKGNARVISGVVPLSRMFGYVNDLRSSTQGRASYSMEFKEYAKMPDHIAAELVDKRVAN.

The tr-type G domain occupies 9–284; it reads EKIRNIGIMA…AVVDYLPSPV (276 aa). Residues 18-25, 82-86, and 136-139 contribute to the GTP site; these read AHIDAGKT, DTPGH, and NKMD.

Belongs to the TRAFAC class translation factor GTPase superfamily. Classic translation factor GTPase family. EF-G/EF-2 subfamily.

The protein localises to the cytoplasm. In terms of biological role, catalyzes the GTP-dependent ribosomal translocation step during translation elongation. During this step, the ribosome changes from the pre-translocational (PRE) to the post-translocational (POST) state as the newly formed A-site-bound peptidyl-tRNA and P-site-bound deacylated tRNA move to the P and E sites, respectively. Catalyzes the coordinated movement of the two tRNA molecules, the mRNA and conformational changes in the ribosome. This Neorickettsia sennetsu (strain ATCC VR-367 / Miyayama) (Ehrlichia sennetsu) protein is Elongation factor G.